The chain runs to 142 residues: UPF0310 protein PYRAB08750 (142 aa).

It belongs to the UPF0310 family.

The chain is UPF0310 protein PYRAB08750 from Pyrococcus abyssi (strain GE5 / Orsay).